The chain runs to 93 residues: CRISPR-associated endoribonuclease Cas2 1 (93 aa).

Asp-8 is a Mg(2+) binding site.

Belongs to the CRISPR-associated endoribonuclease Cas2 protein family. In terms of assembly, homodimer, forms a heterotetramer with a Cas1 homodimer. Mg(2+) is required as a cofactor.

Its function is as follows. CRISPR (clustered regularly interspaced short palindromic repeat), is an adaptive immune system that provides protection against mobile genetic elements (viruses, transposable elements and conjugative plasmids). CRISPR clusters contain sequences complementary to antecedent mobile elements and target invading nucleic acids. CRISPR clusters are transcribed and processed into CRISPR RNA (crRNA). Functions as a ssRNA-specific endoribonuclease. Involved in the integration of spacer DNA into the CRISPR cassette. This Chloroflexus aurantiacus (strain ATCC 29366 / DSM 635 / J-10-fl) protein is CRISPR-associated endoribonuclease Cas2 1.